Consider the following 211-residue polypeptide: Rho-related GTP-binding protein RhoF (211 aa).

M1 bears the N-acetylmethionine mark. 26–33 (GDGGCGKT) lines the GTP pocket. The Effector region signature appears at 48–56 (YAPSVFEKY). Residues 73 to 77 (DTAGQ) and 131 to 134 (CKTD) each bind GTP. Residue C208 is modified to Cysteine methyl ester. C208 is lipidated: S-geranylgeranyl cysteine. Positions 209 to 211 (LLL) are cleaved as a propeptide — removed in mature form.

The protein belongs to the small GTPase superfamily. Rho family.

It is found in the cell membrane. It localises to the cytoplasm. The protein resides in the cytoskeleton. Its function is as follows. Plasma membrane-associated small GTPase which cycles between an active GTP-bound and an inactive GDP-bound state. Causes the formation of thin, actin-rich surface projections called filopodia. Functions cooperatively with CDC42 and Rac to generate additional structures, increasing the diversity of actin-based morphology. The sequence is that of Rho-related GTP-binding protein RhoF (Rhof) from Mus musculus (Mouse).